A 293-amino-acid polypeptide reads, in one-letter code: MIQRPTFFSPIHLLAVLLATFILITGCHRETKKNADDGMPVEHLYDKAHTLMKKGNWAGAELSFKRLIAQYPYGPYTEQAMVENAYAQYKSGKHDDAVSSIDRFIRTYPTHHNIPYMYYLRGLSNSNRDTIFLRKVWSLDLSRRDLSAPQQAYNDFKTVLDRYPNSRYATDAKKQMTELRNMFAQYEMNVTLYYLRRTAWVAAAGRANFLLETYPQSPFQYDAVAALGEAYTHLGNKTLADNARQVLQTNAPDHPWLKGKKWPKYPAAIRKLNPFAGEKSAATGQTNAVVNSN.

The signal sequence occupies residues 1–26 (MIQRPTFFSPIHLLAVLLATFILITG). Cys-27 is lipidated: N-palmitoyl cysteine. A lipid anchor (S-diacylglycerol cysteine) is attached at Cys-27.

This sequence belongs to the BamD family. In terms of assembly, part of the Bam complex.

It is found in the cell outer membrane. Functionally, part of the outer membrane protein assembly complex, which is involved in assembly and insertion of beta-barrel proteins into the outer membrane. The sequence is that of Outer membrane protein assembly factor BamD from Xylella fastidiosa (strain Temecula1 / ATCC 700964).